Consider the following 388-residue polypeptide: Carbamoyl phosphate synthase small chain (388 aa).

Residues Met1–Lys198 form a CPSase region. Residues Ser53, Gly250, and Gly252 each contribute to the L-glutamine site. A Glutamine amidotransferase type-1 domain is found at Glu202 to Lys388. Cys279 functions as the Nucleophile in the catalytic mechanism. Positions 280, 283, 321, 323, and 324 each coordinate L-glutamine. Catalysis depends on residues His363 and Glu365.

This sequence belongs to the CarA family. As to quaternary structure, composed of two chains; the small (or glutamine) chain promotes the hydrolysis of glutamine to ammonia, which is used by the large (or ammonia) chain to synthesize carbamoyl phosphate. Tetramer of heterodimers (alpha,beta)4.

It carries out the reaction hydrogencarbonate + L-glutamine + 2 ATP + H2O = carbamoyl phosphate + L-glutamate + 2 ADP + phosphate + 2 H(+). The enzyme catalyses L-glutamine + H2O = L-glutamate + NH4(+). The protein operates within amino-acid biosynthesis; L-arginine biosynthesis; carbamoyl phosphate from bicarbonate: step 1/1. It participates in pyrimidine metabolism; UMP biosynthesis via de novo pathway; (S)-dihydroorotate from bicarbonate: step 1/3. In terms of biological role, small subunit of the glutamine-dependent carbamoyl phosphate synthetase (CPSase). CPSase catalyzes the formation of carbamoyl phosphate from the ammonia moiety of glutamine, carbonate, and phosphate donated by ATP, constituting the first step of 2 biosynthetic pathways, one leading to arginine and/or urea and the other to pyrimidine nucleotides. The small subunit (glutamine amidotransferase) binds and cleaves glutamine to supply the large subunit with the substrate ammonia. The polypeptide is Carbamoyl phosphate synthase small chain (Caulobacter vibrioides (strain ATCC 19089 / CIP 103742 / CB 15) (Caulobacter crescentus)).